Consider the following 113-residue polypeptide: Transcriptional activator RamA (113 aa).

Positions 9 to 107 (DTIVEWIDDN…HQPPGAYRKE (99 aa)) constitute an HTH araC/xylS-type domain. 2 DNA-binding regions (H-T-H motif) span residues 26–47 (EDIA…LQYK) and 74–97 (VYEI…TRTF).

Probable transcriptional activator. This is Transcriptional activator RamA (ramA) from Enterobacter cloacae.